Consider the following 177-residue polypeptide: Alkyl hydroperoxide reductase AhpD (177 aa).

The Proton donor role is filled by C131. C131 and C134 are oxidised to a cystine. The active-site Cysteine sulfenic acid (-SOH) intermediate is the C134.

The protein belongs to the AhpD family.

The enzyme catalyses N(6)-[(R)-dihydrolipoyl]-L-lysyl-[lipoyl-carrier protein] + a hydroperoxide = N(6)-[(R)-lipoyl]-L-lysyl-[lipoyl-carrier protein] + an alcohol + H2O. Antioxidant protein with alkyl hydroperoxidase activity. Required for the reduction of the AhpC active site cysteine residues and for the regeneration of the AhpC enzyme activity. This Solibacter usitatus (strain Ellin6076) protein is Alkyl hydroperoxide reductase AhpD.